The chain runs to 100 residues: Protein Vpr (100 aa).

Residues 1-42 (MEQALENQGPAREPFNEWTLELLEELKEEAVRHFPRPWLQAC) are homooligomerization. Ser79, Ser98, and Ser100 each carry phosphoserine; by host.

It belongs to the HIV-1 VPR protein family. As to quaternary structure, homooligomer, may form homodimer. Interacts with p6-gag region of the Pr55 Gag precursor protein through a (Leu-X-X)4 motif near the C-terminus of the P6gag protein. Interacts with host UNG. May interact with host RAD23A/HHR23A. Interacts with host VPRBP/DCAF1, leading to hijack the CUL4A-RBX1-DDB1-DCAF1/VPRBP complex, mediating ubiquitination of host proteins such as TERT and ZGPAT and arrest of the cell cycle in G2 phase. Phosphorylated on several residues by host. These phosphorylations regulate VPR activity for the nuclear import of the HIV-1 pre-integration complex.

The protein resides in the virion. It localises to the host nucleus. It is found in the host extracellular space. Functionally, during virus replication, may deplete host UNG protein, and incude G2-M cell cycle arrest. Acts by targeting specific host proteins for degradation by the 26S proteasome, through association with the cellular CUL4A-DDB1 E3 ligase complex by direct interaction with host VPRPB/DCAF-1. Cell cycle arrest reportedly occurs within hours of infection and is not blocked by antiviral agents, suggesting that it is initiated by the VPR carried into the virion. Additionally, VPR induces apoptosis in a cell cycle dependent manner suggesting that these two effects are mechanistically linked. Detected in the serum and cerebrospinal fluid of AIDS patient, VPR may also induce cell death to bystander cells. Its function is as follows. During virus entry, plays a role in the transport of the viral pre-integration (PIC) complex to the host nucleus. This function is crucial for viral infection of non-dividing macrophages. May act directly at the nuclear pore complex, by binding nucleoporins phenylalanine-glycine (FG)-repeat regions. The sequence is that of Protein Vpr from Human immunodeficiency virus type 1 group O (isolate MVP5180) (HIV-1).